Here is a 326-residue protein sequence, read N- to C-terminus: tRNA dimethylallyltransferase (326 aa).

18-25 (GPTASGKS) contributes to the ATP binding site. Substrate is bound at residue 20 to 25 (TASGKS). Interaction with substrate tRNA regions lie at residues 43–46 (DSMQ) and 167–171 (QRIAR).

Belongs to the IPP transferase family. Monomer. Requires Mg(2+) as cofactor.

It carries out the reaction adenosine(37) in tRNA + dimethylallyl diphosphate = N(6)-dimethylallyladenosine(37) in tRNA + diphosphate. Catalyzes the transfer of a dimethylallyl group onto the adenine at position 37 in tRNAs that read codons beginning with uridine, leading to the formation of N6-(dimethylallyl)adenosine (i(6)A). This Rhodospirillum rubrum (strain ATCC 11170 / ATH 1.1.1 / DSM 467 / LMG 4362 / NCIMB 8255 / S1) protein is tRNA dimethylallyltransferase.